The primary structure comprises 709 residues: MEGIGDITVEKVETKIQETPISIETGYFAKQSNGAVIVRQGETAVFVAAVISEEAQADIDFLPLTVDYREKTYAYGKIPGGFVKREGKPTVREILVSRLIDRPIRPMFPKGFFNDVIITAMTLSADDKYDPDVLAIVGASAALHITEAPFEGPVAGVRVCRLDGEFIVNPTYEQRNRSDIDIVVAGTKDAIVMVEGGSEEVSEEVILDAILFAHEEIKKLCDLQEELRSKVGKEKITVEIDEEDERIKAELESIVRESVKEAFNILDKKERNKRIKEIYEEAIQKIEIPEEKEKKAEVIYKEIVSNIMREKVLKEKVRIDGRRPDEIRPIWIRTGLFPRIHGSAIFTRGQTQAFVATTLGAPGEEQIEESIEEGEEKKRFMLHYNFPPFSTGEARPPRAPSRREIGHGNLAERAIEPLIPDEEEFPYVIRVVSEILESNGSTSMATVCGASLSLFDAGVPMKKHVAGIAMGLLKEDDDYVILTDILGDEDHLGDMDFKVAGTRDGVTSIQMDIKIKGLSKEILQEALEQAKKARMHILDLMYKAMPQPRPELSPHAPKVITMRVLPEKIPVIIGPSGKNIKKIIDETGVKIDLDQEGLVRIYAVDGESADKAKEMIERLIMDIELGEVYMGKVTRVEDYGAFVELMPGKLSLLHVSQISPERIRSAKEKIKVGDILTVKVIDIDEMGRAKVSLKEVREGEEPKNKFLFE.

Mg(2+)-binding residues include Asp490 and Asp496. Positions 557–616 (PKVITMRVLPEKIPVIIGPSGKNIKKIIDETGVKIDLDQEGLVRIYAVDGESADKAKEMI) constitute a KH domain. The region spanning 626–694 (GEVYMGKVTR…EMGRAKVSLK (69 aa)) is the S1 motif domain.

It belongs to the polyribonucleotide nucleotidyltransferase family. It depends on Mg(2+) as a cofactor.

It localises to the cytoplasm. It carries out the reaction RNA(n+1) + phosphate = RNA(n) + a ribonucleoside 5'-diphosphate. Involved in mRNA degradation. Catalyzes the phosphorolysis of single-stranded polyribonucleotides processively in the 3'- to 5'-direction. The sequence is that of Polyribonucleotide nucleotidyltransferase from Persephonella marina (strain DSM 14350 / EX-H1).